A 178-amino-acid chain; its full sequence is Large ribosomal subunit protein uL5 (178 aa).

The protein belongs to the universal ribosomal protein uL5 family. As to quaternary structure, part of the 50S ribosomal subunit; contacts the 5S rRNA and probably tRNA. Forms a bridge to the 30S subunit in the 70S ribosome.

Its function is as follows. This is one of the proteins that bind and probably mediate the attachment of the 5S RNA into the large ribosomal subunit, where it forms part of the central protuberance. In the 70S ribosome it contacts protein S13 of the 30S subunit (bridge B1b), connecting the 2 subunits; this bridge is implicated in subunit movement. May contact the P site tRNA; the 5S rRNA and some of its associated proteins might help stabilize positioning of ribosome-bound tRNAs. This is Large ribosomal subunit protein uL5 from Sulfolobus acidocaldarius (strain ATCC 33909 / DSM 639 / JCM 8929 / NBRC 15157 / NCIMB 11770).